A 253-amino-acid chain; its full sequence is Tetraspanin-11 (253 aa).

Transmembrane regions (helical) follow at residues 19 to 39, 63 to 83, and 93 to 113; these read LLFIFNFFFWVGGAAVMAVGI, ILIFVGGLVMTTGFLGFGAII, and YFCLLLVIFLVELVAGVLAHV. An N-linked (GlcNAc...) asparagine glycan is attached at Asn127. The helical transmembrane segment at 220–240 threads the bilayer; that stretch reads LLLMGAVGIGVACLQICGMVL.

It belongs to the tetraspanin (TM4SF) family.

Its subcellular location is the membrane. This Mus musculus (Mouse) protein is Tetraspanin-11 (Tspan11).